Consider the following 412-residue polypeptide: Gamma-glutamyl phosphate reductase (412 aa).

It belongs to the gamma-glutamyl phosphate reductase family.

The protein localises to the cytoplasm. It carries out the reaction L-glutamate 5-semialdehyde + phosphate + NADP(+) = L-glutamyl 5-phosphate + NADPH + H(+). Its pathway is amino-acid biosynthesis; L-proline biosynthesis; L-glutamate 5-semialdehyde from L-glutamate: step 2/2. In terms of biological role, catalyzes the NADPH-dependent reduction of L-glutamate 5-phosphate into L-glutamate 5-semialdehyde and phosphate. The product spontaneously undergoes cyclization to form 1-pyrroline-5-carboxylate. The polypeptide is Gamma-glutamyl phosphate reductase (Actinobacillus pleuropneumoniae serotype 3 (strain JL03)).